A 485-amino-acid chain; its full sequence is Aspartyl/glutamyl-tRNA(Asn/Gln) amidotransferase subunit B (485 aa).

Belongs to the GatB/GatE family. GatB subfamily. Heterotrimer of A, B and C subunits.

The catalysed reaction is L-glutamyl-tRNA(Gln) + L-glutamine + ATP + H2O = L-glutaminyl-tRNA(Gln) + L-glutamate + ADP + phosphate + H(+). It carries out the reaction L-aspartyl-tRNA(Asn) + L-glutamine + ATP + H2O = L-asparaginyl-tRNA(Asn) + L-glutamate + ADP + phosphate + 2 H(+). Functionally, allows the formation of correctly charged Asn-tRNA(Asn) or Gln-tRNA(Gln) through the transamidation of misacylated Asp-tRNA(Asn) or Glu-tRNA(Gln) in organisms which lack either or both of asparaginyl-tRNA or glutaminyl-tRNA synthetases. The reaction takes place in the presence of glutamine and ATP through an activated phospho-Asp-tRNA(Asn) or phospho-Glu-tRNA(Gln). The chain is Aspartyl/glutamyl-tRNA(Asn/Gln) amidotransferase subunit B from Borrelia recurrentis (strain A1).